The chain runs to 428 residues: Putative aminotransferase MSMEG_6286/MSMEI_6121 (428 aa).

G37 is a binding site for substrate. Residues Y72, 102–105 (ASLE), N191, 222–225 (AYAV), and 256–258 (STS) each bind pyridoxal 5'-phosphate. An Isoglutamyl lysine isopeptide (Lys-Gln) (interchain with Q-Cter in protein Pup) cross-link involves residue K339.

Belongs to the class-I pyridoxal-phosphate-dependent aminotransferase family. Pyridoxal 5'-phosphate serves as cofactor.

The sequence is that of Putative aminotransferase MSMEG_6286/MSMEI_6121 from Mycolicibacterium smegmatis (strain ATCC 700084 / mc(2)155) (Mycobacterium smegmatis).